The sequence spans 361 residues: Phospho-N-acetylmuramoyl-pentapeptide-transferase (361 aa).

Helical transmembrane passes span 25–45 (RGILAALTALFLSLWMGPAVI), 73–93 (TMGGSLILLTVTLSVLLWGDL), 98–118 (VWLVLAVMICFGAIGWYDDWI), 139–159 (IFGLAAGLFLYYTADVPAAIT), 168–188 (IALPLAGVSFVVIAYFWIVGF), 200–220 (GLAIMPTVLVACALGVFAYAS), 237–257 (AGELIIICSAIAGAGLGFLWF), 264–284 (VFMGDIGALSLGAVLGTVAVI), 289–309 (LVLVIMGGVFVIETLSVMIQV), and 339–359 (VIVRFWIISVVLVLIGLATLK).

Belongs to the glycosyltransferase 4 family. MraY subfamily. Mg(2+) is required as a cofactor.

It is found in the cell inner membrane. It carries out the reaction UDP-N-acetyl-alpha-D-muramoyl-L-alanyl-gamma-D-glutamyl-meso-2,6-diaminopimeloyl-D-alanyl-D-alanine + di-trans,octa-cis-undecaprenyl phosphate = di-trans,octa-cis-undecaprenyl diphospho-N-acetyl-alpha-D-muramoyl-L-alanyl-D-glutamyl-meso-2,6-diaminopimeloyl-D-alanyl-D-alanine + UMP. Its pathway is cell wall biogenesis; peptidoglycan biosynthesis. In terms of biological role, catalyzes the initial step of the lipid cycle reactions in the biosynthesis of the cell wall peptidoglycan: transfers peptidoglycan precursor phospho-MurNAc-pentapeptide from UDP-MurNAc-pentapeptide onto the lipid carrier undecaprenyl phosphate, yielding undecaprenyl-pyrophosphoryl-MurNAc-pentapeptide, known as lipid I. The sequence is that of Phospho-N-acetylmuramoyl-pentapeptide-transferase from Xanthomonas campestris pv. campestris (strain 8004).